The following is a 180-amino-acid chain: uncharacterized protein (180 aa).

Positions 1–93 are disordered; that stretch reads MPSSVPKTSI…LPRRRNPGWV (93 aa). 2 stretches are compositionally biased toward low complexity: residues 9 to 25 and 47 to 64; these read SIESLGSPSSLSSSQAS and LTSSTESLGYLSSLSSSQ.

This is an uncharacterized protein from Homo sapiens (Human).